The chain runs to 101 residues: Urease subunit beta (101 aa).

The protein belongs to the urease beta subunit family. As to quaternary structure, heterotrimer of UreA (gamma), UreB (beta) and UreC (alpha) subunits. Three heterotrimers associate to form the active enzyme.

The protein localises to the cytoplasm. The enzyme catalyses urea + 2 H2O + H(+) = hydrogencarbonate + 2 NH4(+). Its pathway is nitrogen metabolism; urea degradation; CO(2) and NH(3) from urea (urease route): step 1/1. This is Urease subunit beta from Burkholderia mallei (strain NCTC 10247).